A 321-amino-acid polypeptide reads, in one-letter code: PI-PLC X domain-containing protein 3 (321 aa).

The region spanning 22 to 197 is the PI-PLC X-box domain; the sequence is SIHSIPLTNL…DYQVLVFYHS (176 aa). Active-site residues include His37 and His114.

In Bos taurus (Bovine), this protein is PI-PLC X domain-containing protein 3 (PLCXD3).